Reading from the N-terminus, the 325-residue chain is Olfactory receptor 14L1 (325 aa).

Over Met-1–Ile-43 the chain is Extracellular. A helical membrane pass occupies residues Val-44–Ile-64. At Ile-65–His-72 the chain is on the cytoplasmic side. A helical membrane pass occupies residues Leu-73–Ser-93. The Extracellular segment spans residues Val-94 to Leu-117. The chain crosses the membrane as a helical span at residues Gln-118–Tyr-138. Topologically, residues Asp-139–Glu-151 are cytoplasmic. The helical transmembrane segment at Val-152 to Ile-172 threads the bilayer. Over Cys-173–Glu-214 the chain is Extracellular. Residues Ile-215 to Ser-235 form a helical membrane-spanning segment. Over Tyr-236–Thr-255 the chain is Cytoplasmic. The helical transmembrane segment at Phe-256 to Ala-276 threads the bilayer. Over Tyr-277 to Asp-289 the chain is Extracellular. The chain crosses the membrane as a helical span at residues Val-290–Leu-310. At Arg-311 to Pro-325 the chain is on the cytoplasmic side.

This sequence belongs to the G-protein coupled receptor 1 family.

The protein localises to the cell membrane. In terms of biological role, odorant receptor. This Homo sapiens (Human) protein is Olfactory receptor 14L1.